The following is a 685-amino-acid chain: DNA ligase (685 aa).

NAD(+) is bound by residues 47–51 (DSEYD), 96–97 (SL), and E125. K127 acts as the N6-AMP-lysine intermediate in catalysis. The NAD(+) site is built by R148, E185, K304, and K328. Residues C422, C425, C440, and C446 each contribute to the Zn(2+) site. The BRCT domain occupies 605-685 (ADAQPLKGQT…ELLALLAANA (81 aa)).

This sequence belongs to the NAD-dependent DNA ligase family. LigA subfamily. The cofactor is Mg(2+). It depends on Mn(2+) as a cofactor.

The enzyme catalyses NAD(+) + (deoxyribonucleotide)n-3'-hydroxyl + 5'-phospho-(deoxyribonucleotide)m = (deoxyribonucleotide)n+m + AMP + beta-nicotinamide D-nucleotide.. In terms of biological role, DNA ligase that catalyzes the formation of phosphodiester linkages between 5'-phosphoryl and 3'-hydroxyl groups in double-stranded DNA using NAD as a coenzyme and as the energy source for the reaction. It is essential for DNA replication and repair of damaged DNA. This is DNA ligase from Shewanella baltica (strain OS195).